We begin with the raw amino-acid sequence, 174 residues long: NADH-quinone oxidoreductase subunit B 2 (174 aa).

[4Fe-4S] cluster contacts are provided by Cys-51, Cys-52, Cys-116, and Cys-145.

It belongs to the complex I 20 kDa subunit family. As to quaternary structure, NDH-1 is composed of 14 different subunits. Subunits NuoB, C, D, E, F, and G constitute the peripheral sector of the complex. It depends on [4Fe-4S] cluster as a cofactor.

The protein localises to the cell inner membrane. It carries out the reaction a quinone + NADH + 5 H(+)(in) = a quinol + NAD(+) + 4 H(+)(out). NDH-1 shuttles electrons from NADH, via FMN and iron-sulfur (Fe-S) centers, to quinones in the respiratory chain. The immediate electron acceptor for the enzyme in this species is believed to be ubiquinone. Couples the redox reaction to proton translocation (for every two electrons transferred, four hydrogen ions are translocated across the cytoplasmic membrane), and thus conserves the redox energy in a proton gradient. This Thermodesulfovibrio yellowstonii (strain ATCC 51303 / DSM 11347 / YP87) protein is NADH-quinone oxidoreductase subunit B 2.